The sequence spans 325 residues: Small ribosomal subunit biogenesis GTPase RsgA (325 aa).

Residues 80-241 enclose the CP-type G domain; sequence LSKQIHIIAS…IIDTPGIKGF (162 aa). Residues 129–132 and 183–191 contribute to the GTP site; these read NKID and GHSGVGKST. The Zn(2+) site is built by cysteine 265, cysteine 270, histidine 272, and cysteine 278.

It belongs to the TRAFAC class YlqF/YawG GTPase family. RsgA subfamily. In terms of assembly, monomer. Associates with 30S ribosomal subunit, binds 16S rRNA. It depends on Zn(2+) as a cofactor.

It localises to the cytoplasm. One of several proteins that assist in the late maturation steps of the functional core of the 30S ribosomal subunit. Helps release RbfA from mature subunits. May play a role in the assembly of ribosomal proteins into the subunit. Circularly permuted GTPase that catalyzes slow GTP hydrolysis, GTPase activity is stimulated by the 30S ribosomal subunit. This is Small ribosomal subunit biogenesis GTPase RsgA from Flavobacterium johnsoniae (strain ATCC 17061 / DSM 2064 / JCM 8514 / BCRC 14874 / CCUG 350202 / NBRC 14942 / NCIMB 11054 / UW101) (Cytophaga johnsonae).